Here is a 397-residue protein sequence, read N- to C-terminus: Nuclear RNA export factor 5 (397 aa).

The RRM domain maps to 13–92 (WFKVTIPYGI…IFVSHFTAPY (80 aa)). LRR repeat units follow at residues 160-185 (ELLS…EKAP), 186-209 (KVKT…VKGL), 210-237 (KLEE…AIRD), and 238-265 (CFPK…ETMK). One can recognise an NTF2; truncated domain in the interval 280-367 (LVLQFLQQSN…ESQRWWCLLS (88 aa)).

Belongs to the NXF family. In terms of assembly, interacts with NXT1 and NXT2.

Its subcellular location is the cytoplasm. The protein resides in the nucleus. Functionally, could be involved in the export of mRNA from the nucleus to the cytoplasm. Could also have a role in polarized cytoplasmic transport and localization of mRNA in neurons. This Homo sapiens (Human) protein is Nuclear RNA export factor 5 (NXF5).